A 325-amino-acid chain; its full sequence is L-lactate dehydrogenase (325 aa).

Residues V21, D42, K47, Y73, and 87 to 88 (GA) contribute to the NAD(+) site. Residues Q90, R96, and 128 to 131 (NPVD) each bind substrate. Residues 126–128 (ATN) and S151 contribute to the NAD(+) site. A substrate-binding site is contributed by 156-159 (DTAR). The beta-D-fructose 1,6-bisphosphate site is built by R161 and H176. The active-site Proton acceptor is the H183. Y228 carries the phosphotyrosine modification. T237 provides a ligand contact to substrate.

This sequence belongs to the LDH/MDH superfamily. LDH family. Homotetramer.

Its subcellular location is the cytoplasm. It carries out the reaction (S)-lactate + NAD(+) = pyruvate + NADH + H(+). It participates in fermentation; pyruvate fermentation to lactate; (S)-lactate from pyruvate: step 1/1. Its activity is regulated as follows. Allosterically activated by fructose 1,6-bisphosphate (FBP). Functionally, catalyzes the conversion of lactate to pyruvate. In Shouchella clausii (strain KSM-K16) (Alkalihalobacillus clausii), this protein is L-lactate dehydrogenase.